The following is a 340-amino-acid chain: MGGGVSVELPKRDPPPGVPTDEMLLNVDKMHDVIAPAKLLEYVHIGPLTKDKEDKVKKRYPEFRLVNTGPGGLSALLRQSYNGTAPNCCRTFNRTHYWKKDGKISDKYEEGAVLESCWPDVHDTGKCDVDLFDWCQGDTFDMNICHQWIGSAFNRSDRTVEGRQSLINLYNKMQRLCSKDASVPICELFLHHLRAHNTEDSKEMIDYILRQQSADFKQKYMRCSYPTRDKLEESLKYAEPRECWDPECSNANVNFLLTRNYNNLGLCNIVRCNTSVNNLQMDKTSSLRLSCGLSNSDRFSTVPVNRAKVVQHNIKHSFDLKLHLISLLSLLVIWILIVAI.

The disordered stretch occupies residues 1–20 (MGGGVSVELPKRDPPPGVPT). Gly2 carries N-myristoyl glycine; by host lipidation. At 2–319 (GGGVSVELPK…VQHNIKHSFD (318 aa)) the chain is on the virion surface side. The chain crosses the membrane as a helical; Signal-anchor for type II membrane protein span at residues 320–340 (LKLHLISLLSLLVIWILIVAI).

This sequence belongs to the orthopoxvirus OPG086 family. In terms of assembly, interacts with OPG143. Component of the entry fusion complex (EFC) composed of OPG053, OPG076, OPG086, OPG094, OPG095, OPG099, OPG107, OPG143, OPG104, OPG147 and OPG155. Except for OPG095 and OPG053, each of the EFC proteins is required for assembly or stability of the complex. Post-translationally, unglycosylated because produced in viral factories instead of the classic ER -Golgi route.

The protein resides in the virion membrane. Component of the entry fusion complex (EFC), which consists of 11 proteins. During cell infection, this complex mediates entry of the virion core into the host cytoplasm by a two-step mechanism consisting of lipid mixing of the viral and cellular membranes and subsequent pore formation. The polypeptide is Entry-fusion complex protein OPG094 (OPG094) (Cynomys gunnisoni (Gunnison's prairie dog)).